We begin with the raw amino-acid sequence, 256 residues long: Polycomb group RING finger protein 5 (256 aa).

The RING-type zinc-finger motif lies at 18–57; it reads CYICKGYLIKPTTVTECLHTFCKTCIVQHFEDSNDCPRCG. Basic and acidic residues-rich tracts occupy residues 94–103 and 110–120; these read ESEFWKKNKP and DTSKADKPKVD. The interval 94-133 is disordered; that stretch reads ESEFWKKNKPQENGQDDTSKADKPKVDEEGDENEDDKDYH.

Component of a PRC1-like complex that contains PCGF5, RNF2 and UBE2D3. Interacts with RNF2; the interaction is direct. Interacts with CBX6, CBX7 and CBX8. Interacts with AUTS2; the interaction is direct. Identified in a complex that contains AUTS2, PCGF5, CSNK2B and RNF2.

The protein resides in the nucleus. It is found in the nucleoplasm. Its function is as follows. Component of a Polycomb group (PcG) multiprotein PRC1-like complex, a complex class required to maintain the transcriptionally repressive state of many genes, including Hox genes, throughout development. PcG PRC1 complex acts via chromatin remodeling and modification of histones; it mediates monoubiquitination of histone H2A 'Lys-119', rendering chromatin heritably changed in its expressibility. Within the PRC1-like complex, regulates RNF2 ubiquitin ligase activity. Plays a redundant role with PCGF3 as part of a PRC1-like complex that mediates monoubiquitination of histone H2A 'Lys-119' on the X chromosome and is required for normal silencing of one copy of the X chromosome in XX females. This chain is Polycomb group RING finger protein 5 (PCGF5), found in Homo sapiens (Human).